The chain runs to 495 residues: Membrane-bound lytic murein transglycosylase F (495 aa).

A signal peptide spans 1-30; the sequence is MSRIRHHRFIQSCLVISTLLITLTGCQVES. Residues 31 to 270 form a non-LT domain region; that stretch reads EPKTKLEQIR…LLEEKYFGHV (240 aa). The segment at 272-495 is LT domain; sequence SFDYVDTRAF…SVSQAIETKK (224 aa). The active site involves Glu-315.

This sequence in the N-terminal section; belongs to the bacterial solute-binding protein 3 family. The protein in the C-terminal section; belongs to the transglycosylase Slt family.

The protein localises to the cell outer membrane. The enzyme catalyses Exolytic cleavage of the (1-&gt;4)-beta-glycosidic linkage between N-acetylmuramic acid (MurNAc) and N-acetylglucosamine (GlcNAc) residues in peptidoglycan, from either the reducing or the non-reducing ends of the peptidoglycan chains, with concomitant formation of a 1,6-anhydrobond in the MurNAc residue.. In terms of biological role, murein-degrading enzyme that degrades murein glycan strands and insoluble, high-molecular weight murein sacculi, with the concomitant formation of a 1,6-anhydromuramoyl product. Lytic transglycosylases (LTs) play an integral role in the metabolism of the peptidoglycan (PG) sacculus. Their lytic action creates space within the PG sacculus to allow for its expansion as well as for the insertion of various structures such as secretion systems and flagella. The chain is Membrane-bound lytic murein transglycosylase F from Aliivibrio fischeri (strain ATCC 700601 / ES114) (Vibrio fischeri).